The sequence spans 961 residues: Gamma-tubulin small complex component GCP2 (961 aa).

The segment at 15-76 is disordered; it reads NLHRSPKLAT…KPSIPPLKSE (62 aa). Positions 43–54 are enriched in polar residues; it reads LGSNVVSHPTRS. Positions 55–65 are enriched in basic and acidic residues; the sequence is SPEKTTDKPAD.

It belongs to the TUBGCP family. Component of the gamma-tubulin small complex (gamma-TuSC) composed of tubulin gamma chain, gamma-tubulin complex protein 2 (GCP2) and gamma-tubulin complex protein 3 (GCP3). Interacts with tubulin gamma chain.

Its subcellular location is the cytoplasm. The protein localises to the cytoskeleton. It localises to the flagellum axoneme. The protein resides in the flagellum basal body. Functionally, component of the gamma-tubulin small complex (gamma-TuSC) involved in microtubule (MT) nucleation for the formation of median bodies and in the biogenesis of flagella. Gamma-TuSC may be required for the correct positioning of EB1 within the trophozoites. This is Gamma-tubulin small complex component GCP2 from Giardia intestinalis (strain ATCC 50803 / WB clone C6) (Giardia lamblia).